The chain runs to 340 residues: Anthranilate phosphoribosyltransferase (340 aa).

5-phospho-alpha-D-ribose 1-diphosphate contacts are provided by residues Gly84, 87–88 (GD), Thr92, 94–97 (NIST), 112–120 (KHGSRSVSS), and Ser124. Gly84 contributes to the anthranilate binding site. Mg(2+) is bound at residue Ser96. Arg170 provides a ligand contact to anthranilate. Mg(2+)-binding residues include Asp228 and Glu229.

This sequence belongs to the anthranilate phosphoribosyltransferase family. In terms of assembly, homodimer. It depends on Mg(2+) as a cofactor.

It catalyses the reaction N-(5-phospho-beta-D-ribosyl)anthranilate + diphosphate = 5-phospho-alpha-D-ribose 1-diphosphate + anthranilate. The protein operates within amino-acid biosynthesis; L-tryptophan biosynthesis; L-tryptophan from chorismate: step 2/5. In terms of biological role, catalyzes the transfer of the phosphoribosyl group of 5-phosphorylribose-1-pyrophosphate (PRPP) to anthranilate to yield N-(5'-phosphoribosyl)-anthranilate (PRA). In Psychromonas ingrahamii (strain DSM 17664 / CCUG 51855 / 37), this protein is Anthranilate phosphoribosyltransferase.